Consider the following 361-residue polypeptide: Phosphoserine aminotransferase (361 aa).

Arg-42 is a binding site for L-glutamate. Residues 76–77 (AS), Trp-102, Thr-152, Asp-172, and Gln-195 each bind pyridoxal 5'-phosphate. Lys-196 bears the N6-(pyridoxal phosphate)lysine mark. Residue 237 to 238 (NT) coordinates pyridoxal 5'-phosphate.

Belongs to the class-V pyridoxal-phosphate-dependent aminotransferase family. SerC subfamily. Homodimer. The cofactor is pyridoxal 5'-phosphate.

The protein resides in the cytoplasm. It carries out the reaction O-phospho-L-serine + 2-oxoglutarate = 3-phosphooxypyruvate + L-glutamate. The enzyme catalyses 4-(phosphooxy)-L-threonine + 2-oxoglutarate = (R)-3-hydroxy-2-oxo-4-phosphooxybutanoate + L-glutamate. It participates in amino-acid biosynthesis; L-serine biosynthesis; L-serine from 3-phospho-D-glycerate: step 2/3. Its function is as follows. Catalyzes the reversible conversion of 3-phosphohydroxypyruvate to phosphoserine and of 3-hydroxy-2-oxo-4-phosphonooxybutanoate to phosphohydroxythreonine. The chain is Phosphoserine aminotransferase from Halalkalibacterium halodurans (strain ATCC BAA-125 / DSM 18197 / FERM 7344 / JCM 9153 / C-125) (Bacillus halodurans).